The following is a 168-amino-acid chain: Endoribonuclease YbeY (168 aa).

3 residues coordinate Zn(2+): His-128, His-132, and His-138.

This sequence belongs to the endoribonuclease YbeY family. Zn(2+) serves as cofactor.

It localises to the cytoplasm. Its function is as follows. Single strand-specific metallo-endoribonuclease involved in late-stage 70S ribosome quality control and in maturation of the 3' terminus of the 16S rRNA. This chain is Endoribonuclease YbeY, found in Sphingopyxis alaskensis (strain DSM 13593 / LMG 18877 / RB2256) (Sphingomonas alaskensis).